Here is a 720-residue protein sequence, read N- to C-terminus: Polyribonucleotide nucleotidyltransferase (720 aa).

Residues Asp487 and Asp493 each coordinate Mg(2+). The KH domain occupies 554–613; that stretch reads PRIETFKIPTDKIREVIGTGGKVIREIVEKTGAKVNIEDDGTVKVASSDGEAMKAAIKWI. Positions 623-691 constitute an S1 motif domain; sequence GQIYDGTVVK…DRGKTRLSMK (69 aa). The disordered stretch occupies residues 699–720; the sequence is EDLEAKDKVAEGEKAPREAAGE. Residues 701–720 are compositionally biased toward basic and acidic residues; that stretch reads LEAKDKVAEGEKAPREAAGE.

Belongs to the polyribonucleotide nucleotidyltransferase family. Requires Mg(2+) as cofactor.

The protein localises to the cytoplasm. It carries out the reaction RNA(n+1) + phosphate = RNA(n) + a ribonucleoside 5'-diphosphate. Its function is as follows. Involved in mRNA degradation. Catalyzes the phosphorolysis of single-stranded polyribonucleotides processively in the 3'- to 5'-direction. The polypeptide is Polyribonucleotide nucleotidyltransferase (Bradyrhizobium diazoefficiens (strain JCM 10833 / BCRC 13528 / IAM 13628 / NBRC 14792 / USDA 110)).